Consider the following 653-residue polypeptide: MASKKKERGPPPHSRSWQALTPPLSEWILDAVAAMGFTRMTPVQASTIPLFMGHKDVVVEAVTGSGKTMAFLIPVVEKLLRLEAPIKKHHVGAIIVSPTRELAEQIYKVLLSLLAFHAPSAAAIQPSTSDETADGETTLPSYPSSTLKVVPQLLLGGATTPAQDLSTFLKRSPNLFVSTPGRLLELLSSPHVHCPQTSFEVLVLDEADRLLDLGFKDDLQKTLARLPKQRRTGLFSATVSDAVDQIIRVGLRNPVKIAVKVKGAPGTEEKRTPASLQMTYLLTRPSHKIPAIRQILNSIDNTPQKTILYFSTCAAVDYWSHVLPSLLPEIFVTLPLHGKHPPNVRQKNFSRFTNSVSPSVLLTTDVAARGLDIPLVDLVIQFDPPTDPKAYLHRCGRAGRAGRRGLSVILLCPGREEDYIPFLEVRKTPVSLLESPPVALSDTLATEATSKIRETVLRDRALHDKAQKAFVSWVRSYTKHQSSSIFRITDIDWEEAGRAWGLLKLPKMPELQKFSGDRTLGVTLDWDKYSYKDKQREKHRQESLNSATTHNPLKRPAPSSSSNNDTAPWSKTLEKKSDKEKRRERKRAKKEREHWEKMTEEEKTKSRETHQMLEELRKKNRQELNAKSHTSSSVLSKPQEAELDGESEFEGFD.

Residues 17 to 45 carry the Q motif motif; sequence WQALTPPLSEWILDAVAAMGFTRMTPVQA. Residues 48 to 257 form the Helicase ATP-binding domain; the sequence is IPLFMGHKDV…RVGLRNPVKI (210 aa). 61–68 contributes to the ATP binding site; sequence AVTGSGKT. The DEAD box motif lies at 205-208; the sequence is DEAD. Residues 291 to 444 enclose the Helicase C-terminal domain; that stretch reads AIRQILNSID…SPPVALSDTL (154 aa). Residues 534 to 653 are disordered; the sequence is KQREKHRQES…DGESEFEGFD (120 aa). Residues 558-569 are compositionally biased toward polar residues; that stretch reads PSSSSNNDTAPW. Residues 571-627 adopt a coiled-coil conformation; the sequence is KTLEKKSDKEKRRERKRAKKEREHWEKMTEEEKTKSRETHQMLEELRKKNRQELNAK. Basic and acidic residues-rich tracts occupy residues 572–581 and 590–626; these read TLEKKSDKEK and KEREHWEKMTEEEKTKSRETHQMLEELRKKNRQELNA. A compositionally biased stretch (polar residues) spans 627–636; sequence KSHTSSSVLS. A compositionally biased stretch (acidic residues) spans 641-653; that stretch reads AELDGESEFEGFD.

This sequence belongs to the DEAD box helicase family. DDX55/SPB4 subfamily. Component of pre-60S ribosomal complexes.

It is found in the nucleus. The protein resides in the nucleolus. It catalyses the reaction ATP + H2O = ADP + phosphate + H(+). Functionally, ATP-binding RNA helicase involved in the biogenesis of 60S ribosomal subunits. Binds 90S pre-ribosomal particles and dissociates from pre-60S ribosomal particles after processing of 27SB pre-rRNA. Required for the normal formation of 18S rRNA through the processing of pre-rRNAs at sites A0, A1 and A2, and the normal formation of 25S and 5.8S rRNAs through the processing of pre-rRNAs at sites C1 and C2. This is ATP-dependent rRNA helicase SPB4 from Coccidioides immitis (strain RS) (Valley fever fungus).